Consider the following 427-residue polypeptide: Galactose-3-O-sulfotransferase 3 (427 aa).

Over 1 to 19 the chain is Cytoplasmic; that stretch reads MPPIFQRLQQATKMSRRKI. A helical; Signal-anchor for type II membrane protein transmembrane segment spans residues 20 to 40; that stretch reads LLLVLGCSTLSLLIHQGAQLS. Residues 41–427 are Lumenal-facing; the sequence is WYPKLFPLSC…RPIRALRPGH (387 aa). N-linked (GlcNAc...) asparagine glycosylation is found at asparagine 90, asparagine 109, asparagine 176, and asparagine 301. Residues 404 to 427 form a disordered region; that stretch reads MRLRPEPVLDNPPPRPIRALRPGH.

It belongs to the galactose-3-O-sulfotransferase family. The cofactor is Mg(2+).

It is found in the golgi apparatus. Its subcellular location is the golgi stack membrane. It participates in protein modification; carbohydrate sulfation. In terms of biological role, transfers a sulfate to position 3 of non-reducing beta-galactosyl residues in N-glycans and core2-branched O-glycans. Has high activity towards Gal-beta-1,4-GlcNAc, Gal-beta-1,4(Fuc-alpha-1,3)GlcNAc and lower activity towards Gal-beta-1,3(Fuc-alpha-1,4)GlcNAc. The protein is Galactose-3-O-sulfotransferase 3 (GAL3ST3) of Bos taurus (Bovine).